A 1160-amino-acid chain; its full sequence is Pesticidal crystal protein Cry8Ca (1160 aa).

The protein belongs to the delta endotoxin family.

Its function is as follows. Promotes colloidosmotic lysis by binding to the midgut epithelial cells of insects. Active on various scarabaeid beetles such as Anomala cuprea, A.rufocuprea and Popillia japonica. In Bacillus thuringiensis subsp. japonensis, this protein is Pesticidal crystal protein Cry8Ca (cry8Ca).